The primary structure comprises 285 residues: tRNA uridine(34) hydroxylase (285 aa).

Positions 130–225 (RGDDVVFFDG…YGEAFGDTGL (96 aa)) constitute a Rhodanese domain. Catalysis depends on C185, which acts as the Cysteine persulfide intermediate.

It belongs to the TrhO family.

It carries out the reaction uridine(34) in tRNA + AH2 + O2 = 5-hydroxyuridine(34) in tRNA + A + H2O. Its function is as follows. Catalyzes oxygen-dependent 5-hydroxyuridine (ho5U) modification at position 34 in tRNAs. This Rhodococcus jostii (strain RHA1) protein is tRNA uridine(34) hydroxylase.